We begin with the raw amino-acid sequence, 361 residues long: Phospho-N-acetylmuramoyl-pentapeptide-transferase (361 aa).

Transmembrane regions (helical) follow at residues 27–47 (GALF…ISLL), 72–92 (TPTM…LLWA), 99–119 (VWVT…DDYL), 135–155 (LALE…YSPA), 169–189 (ALLN…VGAG), 200–220 (GLAI…AYLV), 240–260 (LAVV…FNAP), 264–284 (IFMG…IAVA), 289–309 (IVLA…IIQV), and 338–358 (QVVI…LATL).

The protein belongs to the glycosyltransferase 4 family. MraY subfamily. The cofactor is Mg(2+).

It is found in the cell inner membrane. The enzyme catalyses UDP-N-acetyl-alpha-D-muramoyl-L-alanyl-gamma-D-glutamyl-meso-2,6-diaminopimeloyl-D-alanyl-D-alanine + di-trans,octa-cis-undecaprenyl phosphate = di-trans,octa-cis-undecaprenyl diphospho-N-acetyl-alpha-D-muramoyl-L-alanyl-D-glutamyl-meso-2,6-diaminopimeloyl-D-alanyl-D-alanine + UMP. The protein operates within cell wall biogenesis; peptidoglycan biosynthesis. Functionally, catalyzes the initial step of the lipid cycle reactions in the biosynthesis of the cell wall peptidoglycan: transfers peptidoglycan precursor phospho-MurNAc-pentapeptide from UDP-MurNAc-pentapeptide onto the lipid carrier undecaprenyl phosphate, yielding undecaprenyl-pyrophosphoryl-MurNAc-pentapeptide, known as lipid I. The polypeptide is Phospho-N-acetylmuramoyl-pentapeptide-transferase (Methylobacterium radiotolerans (strain ATCC 27329 / DSM 1819 / JCM 2831 / NBRC 15690 / NCIMB 10815 / 0-1)).